The chain runs to 326 residues: Type II methyltransferase M.EcoRI (326 aa).

The protein belongs to the N(4)/N(6)-methyltransferase family. In terms of assembly, monomer.

It carries out the reaction a 2'-deoxyadenosine in DNA + S-adenosyl-L-methionine = an N(6)-methyl-2'-deoxyadenosine in DNA + S-adenosyl-L-homocysteine + H(+). A methylase that recognizes the double-stranded sequence 5'-GAATTC-3', methylates A-3 on both strands, and protects the DNA from cleavage by the EcoRI endonuclease. This chain is Type II methyltransferase M.EcoRI (ecoRIM), found in Escherichia coli.